The following is a 175-amino-acid chain: NADH-ubiquinone oxidoreductase chain 6 (175 aa).

Transmembrane regions (helical) follow at residues 1–21 (MMTYIVFILSVIFVIGFVGFS), 25–45 (SPIYGGLVLIVSGGVGCGIIM), 47–67 (FGGSFLGLMVFLIYLGGMLVV), 88–108 (TVMGVFLLGLLMEVMLVLYVL), and 149–169 (YGAWVVVVTGWSLLVGVLVIL).

The protein belongs to the complex I subunit 6 family. Core subunit of respiratory chain NADH dehydrogenase (Complex I) which is composed of 45 different subunits.

The protein localises to the mitochondrion inner membrane. It catalyses the reaction a ubiquinone + NADH + 5 H(+)(in) = a ubiquinol + NAD(+) + 4 H(+)(out). Its function is as follows. Core subunit of the mitochondrial membrane respiratory chain NADH dehydrogenase (Complex I) which catalyzes electron transfer from NADH through the respiratory chain, using ubiquinone as an electron acceptor. Essential for the catalytic activity and assembly of complex I. In Equus asinus (Donkey), this protein is NADH-ubiquinone oxidoreductase chain 6 (MT-ND6).